The sequence spans 219 residues: Probable transcriptional regulator flp (219 aa).

The HTH crp-type domain maps to 144 to 212 (DSINVRLTHY…GKQVRILNAE (69 aa)). Residues 191–210 (KRLAEEKLIERSGKQVRILN) constitute a DNA-binding region (H-T-H motif).

In Lacticaseibacillus casei (Lactobacillus casei), this protein is Probable transcriptional regulator flp (flp).